Consider the following 335-residue polypeptide: MSFFQYKNYIEEGDLVLAYISRSTIKPINVKKGEIFNTRYGHFEHDKMIGMKYGEQMPGAKGYGFIHLLHPTPELWTLSLPHRTQIVYSPDSSYIIQRLNVKPGSRVIEAGTGSASFTHSFARTVTLSGKVFTYEFHEPRYLEAKKELEEHKLDNTTITHRDVCNDGFSIDNESIEGDVVFLDLPSPWDAIPHLDSVISTSKAAGICCFSPCIEQVDRTVRALEENGWTEIEIVEVAAKRWSARKEMVRSVADAVQRIREIQNGRKTGLEVMKKGPSEEPPAKLQKTDNGYKTPKKSTKVKEGDENYTWLNATKSESEIKSHTSYLTFACKIPKQ.

S-adenosyl-L-methionine contacts are provided by residues 114–116, E135, R140, 162–163, and D183; these read SAS and DV. Basic and acidic residues predominate over residues 271–281; that stretch reads VMKKGPSEEPP. The segment at 271 to 302 is disordered; that stretch reads VMKKGPSEEPPAKLQKTDNGYKTPKKSTKVKE.

It belongs to the class I-like SAM-binding methyltransferase superfamily. TRM61 family. As to quaternary structure, heterotetramer; composed of two copies of TRM6 and two copies of TRM61.

It localises to the nucleus. The catalysed reaction is adenosine(58) in tRNA + S-adenosyl-L-methionine = N(1)-methyladenosine(58) in tRNA + S-adenosyl-L-homocysteine + H(+). Catalytic subunit of tRNA (adenine-N(1)-)-methyltransferase, which catalyzes the formation of N(1)-methyladenine at position 58 (m1A58) in initiator methionyl-tRNA. The protein is tRNA (adenine(58)-N(1))-methyltransferase catalytic subunit TRM61 (TRM61) of Candida albicans (strain SC5314 / ATCC MYA-2876) (Yeast).